We begin with the raw amino-acid sequence, 182 residues long: Caltractin ICL1b (182 aa).

The tract at residues 1–31 is disordered; it reads MSRRGQQPPPQQQQAPPQKNQAGKFNPAEFV. 4 consecutive EF-hand domains span residues 38–73, 74–109, 111–146, and 147–182; these read EEVL…LGFE, AKNQ…RISE, DSKA…LGET, and MDDS…KTFA. 10 residues coordinate Ca(2+): D51, D53, T55, S57, E62, D87, D89, S91, Q93, and E98.

It belongs to the centrin family.

The protein resides in the cytoplasm. It is found in the cytoskeleton. Plays a fundamental role in microtubule organizing center structure and function. Component of the infraciliary lattice (ICL) and the ciliary basal bodies. The chain is Caltractin ICL1b (Icl1b) from Paramecium tetraurelia.